The primary structure comprises 114 residues: uncharacterized protein (114 aa).

2 helical membrane passes run 58 to 78 (CLLGVGAVGTFISTFPQFFLL) and 94 to 114 (SISYAASAIFSFSIFFFFCLA).

It localises to the membrane. This is an uncharacterized protein from Saccharomyces cerevisiae (strain ATCC 204508 / S288c) (Baker's yeast).